The primary structure comprises 208 residues: N-(5'-phosphoribosyl)anthranilate isomerase (208 aa).

Belongs to the TrpF family.

It catalyses the reaction N-(5-phospho-beta-D-ribosyl)anthranilate = 1-(2-carboxyphenylamino)-1-deoxy-D-ribulose 5-phosphate. The protein operates within amino-acid biosynthesis; L-tryptophan biosynthesis; L-tryptophan from chorismate: step 3/5. In Nitrosomonas eutropha (strain DSM 101675 / C91 / Nm57), this protein is N-(5'-phosphoribosyl)anthranilate isomerase.